The following is an 880-amino-acid chain: DNA-directed RNA polymerase subunit beta C-terminal section (880 aa).

The protein belongs to the RNA polymerase beta chain family. In plastids the minimal PEP RNA polymerase catalytic core is composed of four subunits: alpha, beta, beta', and beta''. When a (nuclear-encoded) sigma factor is associated with the core the holoenzyme is formed, which can initiate transcription.

The protein localises to the plastid. It is found in the chloroplast. The enzyme catalyses RNA(n) + a ribonucleoside 5'-triphosphate = RNA(n+1) + diphosphate. In terms of biological role, DNA-dependent RNA polymerase catalyzes the transcription of DNA into RNA using the four ribonucleoside triphosphates as substrates. The polypeptide is DNA-directed RNA polymerase subunit beta C-terminal section (rpoB2) (Pleurastrum terricola (Filamentous green alga)).